The sequence spans 103 residues: uncharacterized protein (103 aa).

This is an uncharacterized protein from Dictyostelium discoideum (Social amoeba).